Reading from the N-terminus, the 77-residue chain is U8-lycotoxin-Ls1a (77 aa).

A signal peptide spans 1–20 (MKLIIFTGLVLFAIVSLIEA). A propeptide spanning residues 21–26 (QAENEK) is cleaved from the precursor.

It belongs to the neurotoxin 19 (CSTX) family. 08 (U8-Lctx) subfamily. In terms of processing, contains 4 disulfide bonds. Expressed by the venom gland.

The protein localises to the secreted. The polypeptide is U8-lycotoxin-Ls1a (Lycosa singoriensis (Wolf spider)).